Reading from the N-terminus, the 206-residue chain is Large ribosomal subunit protein uL4 (206 aa).

The disordered stretch occupies residues 63–93 (MYKQKGTGRARHHSARAPQFRGGGKAHGPVV). The span at 64–77 (YKQKGTGRARHHSA) shows a compositional bias: basic residues.

This sequence belongs to the universal ribosomal protein uL4 family. Part of the 50S ribosomal subunit.

Its function is as follows. One of the primary rRNA binding proteins, this protein initially binds near the 5'-end of the 23S rRNA. It is important during the early stages of 50S assembly. It makes multiple contacts with different domains of the 23S rRNA in the assembled 50S subunit and ribosome. In terms of biological role, forms part of the polypeptide exit tunnel. The protein is Large ribosomal subunit protein uL4 of Sinorhizobium fredii (strain NBRC 101917 / NGR234).